Consider the following 307-residue polypeptide: L-lactate dehydrogenase (307 aa).

NAD(+) is bound by residues V13, D34, R39, Y64, and 78–79 (GV). Position 87 (R87) interacts with substrate. S100 provides a ligand contact to NAD(+). 119–122 (NPVD) is a substrate binding site. T142 provides a ligand contact to NAD(+). 147–150 (DSAR) contacts substrate. The active-site Proton acceptor is H174. T224 contacts substrate.

This sequence belongs to the LDH/MDH superfamily. LDH family. In terms of assembly, homotetramer.

The protein resides in the cytoplasm. It carries out the reaction (S)-lactate + NAD(+) = pyruvate + NADH + H(+). It participates in fermentation; pyruvate fermentation to lactate; (S)-lactate from pyruvate: step 1/1. In terms of biological role, catalyzes the conversion of lactate to pyruvate. This is L-lactate dehydrogenase from Lactobacillus delbrueckii subsp. bulgaricus (strain ATCC BAA-365 / Lb-18).